A 594-amino-acid polypeptide reads, in one-letter code: UvrABC system protein C (594 aa).

The GIY-YIG domain maps to 14–91 (DSPGCYLHKD…IQENMPKYNI (78 aa)). Positions 196–231 (DKIIDDLRSKMLEASHNQEFERAAEYRDLISGIATM) constitute a UVR domain.

It belongs to the UvrC family. In terms of assembly, interacts with UvrB in an incision complex.

Its subcellular location is the cytoplasm. Functionally, the UvrABC repair system catalyzes the recognition and processing of DNA lesions. UvrC both incises the 5' and 3' sides of the lesion. The N-terminal half is responsible for the 3' incision and the C-terminal half is responsible for the 5' incision. In Streptococcus equi subsp. zooepidemicus (strain H70), this protein is UvrABC system protein C.